The chain runs to 574 residues: Frizzled and smoothened-like protein G (574 aa).

Residues 1-19 (MKSIIFITFFIFFLKKLNG) form the signal peptide. The Extracellular segment spans residues 20 to 246 (LPNGYGVGLV…EKWNQIENLS (227 aa)). An FZ domain is found at 30-181 (DPNGQCMNYI…GLYEVPCFNP (152 aa)). 4 cysteine pairs are disulfide-bonded: Cys35–Cys109, Cys48–Cys102, Cys91–Cys138, and Cys127–Cys178. Residues Asn119, Asn161, Asn187, Asn206, Asn233, and Asn244 are each glycosylated (N-linked (GlcNAc...) asparagine). A helical membrane pass occupies residues 247 to 267 (KVLSTISFVCSIYNILSFGIL). The Cytoplasmic portion of the chain corresponds to 268–273 (KKKKTK). A helical transmembrane segment spans residues 274–294 (YTICISALSASVALINLGDII). The Extracellular segment spans residues 295-324 (KIGVGYEKVLCPEPGRFATQVDDPLCGLTA). Residues 325-345 (ALFHVGICSTVLWTTTMAIYL) traverse the membrane as a helical segment. Residues 346-358 (YSAIKNIKLFKFR) lie on the Cytoplasmic side of the membrane. The chain crosses the membrane as a helical span at residues 359-379 (YFIIFNTGFSLTSLIIAASAS). The Extracellular segment spans residues 380 to 401 (KFEAGTGSIECWIRDRWYSICL). Residues 402–422 (FWLPCGICLLIGTICIASVIV) traverse the membrane as a helical segment. The Cytoplasmic segment spans residues 423–445 (EIYKVSKNIKLSESETIMRQIKP). A helical membrane pass occupies residues 446–466 (IISVILVSGSFTYLFIIFFDI). The Extracellular segment spans residues 467-502 (ERNFGGYRSAVTDYVLCLLNSTDNGIECHTSGPSYN). N-linked (GlcNAc...) asparagine glycosylation occurs at Asn486. The helical transmembrane segment at 503 to 523 (PYFMFYFFMRFFGILFFLIYG) threads the bilayer. At 524-574 (TSKNARDSWYELFIKIKVSLSETSSTISNNSGGGSSQQKQQQQNEIKLEKI) the chain is on the cytoplasmic side. The segment covering 550-568 (ISNNSGGGSSQQKQQQQNE) has biased composition (low complexity). The interval 550–574 (ISNNSGGGSSQQKQQQQNEIKLEKI) is disordered.

This sequence belongs to the G-protein coupled receptor Fz/Smo family.

It localises to the membrane. The chain is Frizzled and smoothened-like protein G (fslG) from Dictyostelium discoideum (Social amoeba).